The chain runs to 547 residues: Sesterfisheric acid synthase (547 aa).

The helical transmembrane segment at 19 to 39 (IMGCSLGTGLLVSMIIYNYFF) threads the bilayer. Residues N341 and N404 are each glycosylated (N-linked (GlcNAc...) asparagine). C490 lines the heme pocket.

This sequence belongs to the cytochrome P450 family. The cofactor is heme.

The protein resides in the membrane. It catalyses the reaction sesterfisherol + 3 reduced [NADPH--hemoprotein reductase] + 3 O2 = sesterfisherate + 3 oxidized [NADPH--hemoprotein reductase] + 4 H2O + 4 H(+). Its pathway is secondary metabolite biosynthesis; terpenoid biosynthesis. Functionally, cytochrome P450 monooxygenase; part of the gene cluster that mediates the biosynthesis of sesterfisheric acid. The bifunctional terpene synthase NfSS converts DMAPP and IPP, and also GGPP, into sesterfisherol. The C-terminal prenyltransferase (PT) domain of NfSS catalyzes formation of GFPP, whereas the N-terminal terpene cyclase (TC) domain catalyzes the cyclization of GFPP to sesterfisherol. The cytochrome P450 monooxygenase NfP450 then catalyzes oxidative modifications of sesterfisherol into sesterfisheric acid. This Neosartorya fischeri (strain ATCC 1020 / DSM 3700 / CBS 544.65 / FGSC A1164 / JCM 1740 / NRRL 181 / WB 181) (Aspergillus fischerianus) protein is Sesterfisheric acid synthase.